The following is a 337-amino-acid chain: Mitochondrial glutathione transporter SLC25A40 (337 aa).

Solcar repeat units follow at residues 14–132 (VTPL…LSAF), 140–224 (NETR…LKRW), and 234–328 (PTFM…GKSF). Helical transmembrane passes span 20 to 40 (MIAS…LDVV), 104 to 124 (LWSG…IYFT), 146 to 166 (IVAG…LELI), 200 to 221 (WAPT…YENL), 240 to 260 (FTSG…FDVV), and 299 to 319 (GLFT…AIMI).

It belongs to the mitochondrial carrier (TC 2.A.29) family.

It is found in the mitochondrion inner membrane. The enzyme catalyses glutathione(in) = glutathione(out). Its function is as follows. Probable mitochondrial transporter required for glutathione import into mitochondria. Glutathione, which plays key roles in oxidative metabolism, is produced exclusively in the cytosol and is imported in many organelles. Mitochondrial glutathione is required for the activity and stability of proteins containing iron-sulfur clusters, as well as erythropoiesis. This is Mitochondrial glutathione transporter SLC25A40 from Mus musculus (Mouse).